We begin with the raw amino-acid sequence, 215 residues long: Phosphatidylserine decarboxylase proenzyme (215 aa).

S184 functions as the Schiff-base intermediate with substrate; via pyruvic acid in the catalytic mechanism. At S184 the chain carries Pyruvic acid (Ser); by autocatalysis.

Belongs to the phosphatidylserine decarboxylase family. PSD-A subfamily. In terms of assembly, heterodimer of a large membrane-associated beta subunit and a small pyruvoyl-containing alpha subunit. Pyruvate is required as a cofactor. In terms of processing, is synthesized initially as an inactive proenzyme. Formation of the active enzyme involves a self-maturation process in which the active site pyruvoyl group is generated from an internal serine residue via an autocatalytic post-translational modification. Two non-identical subunits are generated from the proenzyme in this reaction, and the pyruvate is formed at the N-terminus of the alpha chain, which is derived from the carboxyl end of the proenzyme. The post-translation cleavage follows an unusual pathway, termed non-hydrolytic serinolysis, in which the side chain hydroxyl group of the serine supplies its oxygen atom to form the C-terminus of the beta chain, while the remainder of the serine residue undergoes an oxidative deamination to produce ammonia and the pyruvoyl prosthetic group on the alpha chain.

The protein resides in the cell membrane. It catalyses the reaction a 1,2-diacyl-sn-glycero-3-phospho-L-serine + H(+) = a 1,2-diacyl-sn-glycero-3-phosphoethanolamine + CO2. It functions in the pathway phospholipid metabolism; phosphatidylethanolamine biosynthesis; phosphatidylethanolamine from CDP-diacylglycerol: step 2/2. Functionally, catalyzes the formation of phosphatidylethanolamine (PtdEtn) from phosphatidylserine (PtdSer). This chain is Phosphatidylserine decarboxylase proenzyme, found in Ralstonia pickettii (strain 12J).